Reading from the N-terminus, the 548-residue chain is Chaperonin GroEL (548 aa).

Residues 29-32 (THGP), K50, 86-90 (DGTTT), G414, and D493 contribute to the ATP site.

This sequence belongs to the chaperonin (HSP60) family. Forms a cylinder of 14 subunits composed of two heptameric rings stacked back-to-back. Interacts with the co-chaperonin GroES.

It localises to the cytoplasm. It carries out the reaction ATP + H2O + a folded polypeptide = ADP + phosphate + an unfolded polypeptide.. Together with its co-chaperonin GroES, plays an essential role in assisting protein folding. The GroEL-GroES system forms a nano-cage that allows encapsulation of the non-native substrate proteins and provides a physical environment optimized to promote and accelerate protein folding. This is Chaperonin GroEL from Desulfatibacillum aliphaticivorans.